We begin with the raw amino-acid sequence, 160 residues long: Tic20 family protein (160 aa).

4 consecutive transmembrane segments (helical) span residues 13 to 33, 53 to 73, 87 to 107, and 122 to 142; these read FFSA…GGFL, FYYQ…MAVV, MQAI…AYVI, and NFAF…SVLG.

It belongs to the Tic20 family.

The protein localises to the cell membrane. The polypeptide is Tic20 family protein (Synechocystis sp. (strain ATCC 27184 / PCC 6803 / Kazusa)).